We begin with the raw amino-acid sequence, 769 residues long: Polyribonucleotide nucleotidyltransferase (769 aa).

The Mg(2+) site is built by D490 and D496. The KH domain maps to P557 to I616. An S1 motif domain is found at G626 to R694. Positions P700 to N734 are enriched in basic and acidic residues. The segment at P700 to E769 is disordered. Residues N736–S746 are compositionally biased toward low complexity. The span at F747 to E769 shows a compositional bias: basic and acidic residues.

The protein belongs to the polyribonucleotide nucleotidyltransferase family. It depends on Mg(2+) as a cofactor.

The protein localises to the cytoplasm. It catalyses the reaction RNA(n+1) + phosphate = RNA(n) + a ribonucleoside 5'-diphosphate. Functionally, involved in mRNA degradation. Catalyzes the phosphorolysis of single-stranded polyribonucleotides processively in the 3'- to 5'-direction. The sequence is that of Polyribonucleotide nucleotidyltransferase from Lactococcus lactis subsp. cremoris (strain SK11).